Reading from the N-terminus, the 460-residue chain is ATP synthase subunit beta (460 aa).

Residue 150 to 157 (GGAGVGKT) coordinates ATP.

Belongs to the ATPase alpha/beta chains family. In terms of assembly, F-type ATPases have 2 components, CF(1) - the catalytic core - and CF(0) - the membrane proton channel. CF(1) has five subunits: alpha(3), beta(3), gamma(1), delta(1), epsilon(1). CF(0) has three main subunits: a(1), b(2) and c(9-12). The alpha and beta chains form an alternating ring which encloses part of the gamma chain. CF(1) is attached to CF(0) by a central stalk formed by the gamma and epsilon chains, while a peripheral stalk is formed by the delta and b chains.

The protein resides in the cell inner membrane. The catalysed reaction is ATP + H2O + 4 H(+)(in) = ADP + phosphate + 5 H(+)(out). Functionally, produces ATP from ADP in the presence of a proton gradient across the membrane. The catalytic sites are hosted primarily by the beta subunits. The protein is ATP synthase subunit beta of Sodalis glossinidius (strain morsitans).